We begin with the raw amino-acid sequence, 231 residues long: Aspartate/glutamate leucyltransferase (231 aa).

This sequence belongs to the R-transferase family. Bpt subfamily.

It is found in the cytoplasm. It catalyses the reaction N-terminal L-glutamyl-[protein] + L-leucyl-tRNA(Leu) = N-terminal L-leucyl-L-glutamyl-[protein] + tRNA(Leu) + H(+). The enzyme catalyses N-terminal L-aspartyl-[protein] + L-leucyl-tRNA(Leu) = N-terminal L-leucyl-L-aspartyl-[protein] + tRNA(Leu) + H(+). Functions in the N-end rule pathway of protein degradation where it conjugates Leu from its aminoacyl-tRNA to the N-termini of proteins containing an N-terminal aspartate or glutamate. This chain is Aspartate/glutamate leucyltransferase, found in Pseudoalteromonas atlantica (strain T6c / ATCC BAA-1087).